Consider the following 344-residue polypeptide: DNA-directed RNA polymerase subunit alpha (344 aa).

An alpha N-terminal domain (alpha-NTD) region spans residues 1 to 238 (MKVIKTAPLI…KQLGVFGERP (238 aa)). The tract at residues 254–344 (AKDLSAKIES…EKLEDKGGND (91 aa)) is alpha C-terminal domain (alpha-CTD).

It belongs to the RNA polymerase alpha chain family. As to quaternary structure, homodimer. The RNAP catalytic core consists of 2 alpha, 1 beta, 1 beta' and 1 omega subunit. When a sigma factor is associated with the core the holoenzyme is formed, which can initiate transcription.

It carries out the reaction RNA(n) + a ribonucleoside 5'-triphosphate = RNA(n+1) + diphosphate. DNA-dependent RNA polymerase catalyzes the transcription of DNA into RNA using the four ribonucleoside triphosphates as substrates. This Helicobacter pylori (strain J99 / ATCC 700824) (Campylobacter pylori J99) protein is DNA-directed RNA polymerase subunit alpha.